A 251-amino-acid polypeptide reads, in one-letter code: Bidirectional sugar transporter SWEET4 (251 aa).

Topologically, residues 1–12 (MVNATVARNIAG) are extracellular. Asn-3 carries N-linked (GlcNAc...) asparagine glycosylation. In terms of domain architecture, MtN3/slv 1 spans 12 to 96 (GICGNVISLF…LAIFFFFSPT (85 aa)). A helical transmembrane segment spans residues 13-33 (ICGNVISLFLFLSPIPTFITI). Topologically, residues 34–45 (YKKKKVEEYKAD) are cytoplasmic. The helical transmembrane segment at 46 to 66 (PYLATVLNCALWVFYGLPMVQ) threads the bilayer. The Extracellular portion of the chain corresponds to 67–72 (PDSLLV). Residues 73 to 93 (ITINGTGLAIELVYLAIFFFF) form a helical membrane-spanning segment. Topologically, residues 94 to 103 (SPTSRKVKVG) are cytoplasmic. The helical transmembrane segment at 104-124 (LWLIGEMVFVGIVATCTLLLF) threads the bilayer. Residues 125 to 132 (HTHNQRSS) are Extracellular-facing. Residues 133 to 153 (FVGIFCVIFVSLMYIAPLTIM) traverse the membrane as a helical segment. Residues 133-216 (FVGIFCVIFV…LILYACYYKT (84 aa)) form the MtN3/slv 2 domain. Topologically, residues 154–163 (SKVIKTKSVK) are cytoplasmic. The helical transmembrane segment at 164–186 (YMPFSLSLANFLNGVVWVIYALI) threads the bilayer. At 187 to 190 (KFDL) the chain is on the extracellular side. The chain crosses the membrane as a helical span at residues 191 to 213 (FILIGNGLGTVSGAVQLILYACY). At 214–251 (YKTTPKDDEDEEDEENLSKVNSQLQLSGNSGQAKRVSA) the chain is on the cytoplasmic side. Residues 220 to 251 (DDEDEEDEENLSKVNSQLQLSGNSGQAKRVSA) form a disordered region. The span at 231–245 (SKVNSQLQLSGNSGQ) shows a compositional bias: polar residues.

The protein belongs to the SWEET sugar transporter family. In terms of assembly, forms homooligomers and heterooligomers with SWEET8 and SWEET17.

The protein resides in the cell membrane. Mediates both low-affinity uptake and efflux of sugar across the plasma membrane. This is Bidirectional sugar transporter SWEET4 from Arabidopsis thaliana (Mouse-ear cress).